We begin with the raw amino-acid sequence, 257 residues long: Inositol diphosphatase DSP2 (257 aa).

Residues 66-251 (NFSMVDNGIF…VSGLKHTPMS (186 aa)) form the Tyrosine-protein phosphatase domain. The 1D-myo-inositol hexakisphosphate site is built by Ile168 and Lys172. Cys192 (phosphocysteine intermediate) is an active-site residue.

This sequence belongs to the protein-tyrosine phosphatase family. Atypical dual-specificity phosphatase Siw14-like subfamily. In terms of tissue distribution, expressed in roots, leaves, stems, flowers and siliques.

It carries out the reaction 5-diphospho-1D-myo-inositol 1,2,3,4,6-pentakisphosphate + H2O = 1D-myo-inositol hexakisphosphate + phosphate + H(+). The enzyme catalyses 1,5-bis(diphospho)-1D-myo-inositol 2,3,4,6-tetrakisphosphate + H2O = 1-diphospho-1D-myo-inositol 2,3,4,5,6-pentakisphosphate + phosphate + 2 H(+). The catalysed reaction is 3,5-bis(diphospho)-1D-myo-inositol 1,2,4,6-tetrakisphosphate + H2O = 3-diphospho-1D-myo-inositol 1,2,4,5,6-pentakisphosphate + phosphate + 2 H(+). It catalyses the reaction 6-diphospho-1D-myo-inositol pentakisphosphate + H2O = 1D-myo-inositol hexakisphosphate + phosphate + H(+). In terms of biological role, cleaves the beta-phosphate at the 5-position of soluble inositol pyrophosphates. Has highest activity on 5-diphosphoinositol 1,2,3,4,6-pentakisphosphate (5-InsP(7)), 1,5-bis-diphosphoinositol 2,3,4,6-tetrakisphosphate (1,5-InsP(8)) and 3,5-InsP(8). Possesses phosphotyrosine phosphatase activity in vitro. Dephosphorylates the phosphoinositides PI(3,5)P2. Hydrolyzes para-nitrophenyl phosphate and O-methylfluorescein phosphate in vitro. The polypeptide is Inositol diphosphatase DSP2 (Arabidopsis thaliana (Mouse-ear cress)).